A 94-amino-acid polypeptide reads, in one-letter code: Small ribosomal subunit protein uS17 (94 aa).

Positions Met1 to Lys22 are disordered.

The protein belongs to the universal ribosomal protein uS17 family. As to quaternary structure, part of the 30S ribosomal subunit.

Functionally, one of the primary rRNA binding proteins, it binds specifically to the 5'-end of 16S ribosomal RNA. In Chlorobium luteolum (strain DSM 273 / BCRC 81028 / 2530) (Pelodictyon luteolum), this protein is Small ribosomal subunit protein uS17.